We begin with the raw amino-acid sequence, 206 residues long: Dephospho-CoA kinase (206 aa).

Positions 4–200 (TVALTGGIGS…ASYLKLASQF (197 aa)) constitute a DPCK domain. 12–17 (GSGKST) serves as a coordination point for ATP.

Belongs to the CoaE family.

The protein resides in the cytoplasm. It catalyses the reaction 3'-dephospho-CoA + ATP = ADP + CoA + H(+). It participates in cofactor biosynthesis; coenzyme A biosynthesis; CoA from (R)-pantothenate: step 5/5. In terms of biological role, catalyzes the phosphorylation of the 3'-hydroxyl group of dephosphocoenzyme A to form coenzyme A. The protein is Dephospho-CoA kinase of Salmonella typhimurium (strain LT2 / SGSC1412 / ATCC 700720).